The following is a 311-amino-acid chain: Ribosomal RNA small subunit methyltransferase H (311 aa).

Residues 33-35, Asp53, Phe80, Asp101, and Gln108 contribute to the S-adenosyl-L-methionine site; that span reads AGH.

Belongs to the methyltransferase superfamily. RsmH family.

It localises to the cytoplasm. The catalysed reaction is cytidine(1402) in 16S rRNA + S-adenosyl-L-methionine = N(4)-methylcytidine(1402) in 16S rRNA + S-adenosyl-L-homocysteine + H(+). In terms of biological role, specifically methylates the N4 position of cytidine in position 1402 (C1402) of 16S rRNA. This is Ribosomal RNA small subunit methyltransferase H from Geobacter sulfurreducens (strain ATCC 51573 / DSM 12127 / PCA).